The following is a 231-amino-acid chain: MSNLTVRATSTRQPVGLADAFFDRDAQTLARDLLGKVIRHRVGDLWLSARIIETEAYYCEEKGSHASLGYTEKRKALFLDGGHIYMYYARGGDSLNFSAQGPGNAVLIKSAYPWVDEISGPASLAQMLLNNPDAQGRPRPSQKLCAGQTLLCKALGLKVPVWDAKRFDHEILLVEDTGPAPTHVIQTTRLGIPHGRDEHLMYRFVDAAYAQWCTRNPLRRGQVEGRDYFLL.

The protein belongs to the DNA glycosylase MPG family.

This chain is Putative 3-methyladenine DNA glycosylase, found in Pseudomonas fluorescens (strain Pf0-1).